The sequence spans 142 residues: Large ribosomal subunit protein bL17 (142 aa).

It belongs to the bacterial ribosomal protein bL17 family. In terms of assembly, part of the 50S ribosomal subunit. Contacts protein L32.

The sequence is that of Large ribosomal subunit protein bL17 from Chlamydia caviae (strain ATCC VR-813 / DSM 19441 / 03DC25 / GPIC) (Chlamydophila caviae).